The chain runs to 258 residues: Aspartate/glutamate leucyltransferase (258 aa).

Belongs to the R-transferase family. Bpt subfamily.

It is found in the cytoplasm. It catalyses the reaction N-terminal L-glutamyl-[protein] + L-leucyl-tRNA(Leu) = N-terminal L-leucyl-L-glutamyl-[protein] + tRNA(Leu) + H(+). The catalysed reaction is N-terminal L-aspartyl-[protein] + L-leucyl-tRNA(Leu) = N-terminal L-leucyl-L-aspartyl-[protein] + tRNA(Leu) + H(+). Its function is as follows. Functions in the N-end rule pathway of protein degradation where it conjugates Leu from its aminoacyl-tRNA to the N-termini of proteins containing an N-terminal aspartate or glutamate. In Rhizobium leguminosarum bv. trifolii (strain WSM2304), this protein is Aspartate/glutamate leucyltransferase.